A 324-amino-acid polypeptide reads, in one-letter code: dITP/XTP pyrophosphatase (324 aa).

The tract at residues 1 to 126 (MTKSIFEYKD…SDNKSDFGDV (126 aa)) is unknown. The interval 127–324 (LLIATRNEGK…EVFPAWQNKQ (198 aa)) is NTP pyrophosphatase. 131–136 (TRNEGK) is a substrate binding site. Catalysis depends on aspartate 193, which acts as the Proton acceptor. Position 193 (aspartate 193) interacts with Mg(2+). Residues serine 194, 277 to 280 (FGYD), lysine 300, and 305 to 306 (HR) each bind substrate.

This sequence belongs to the HAM1 NTPase family. In terms of assembly, homodimer. It depends on Mg(2+) as a cofactor.

It carries out the reaction XTP + H2O = XMP + diphosphate + H(+). The catalysed reaction is dITP + H2O = dIMP + diphosphate + H(+). The enzyme catalyses ITP + H2O = IMP + diphosphate + H(+). Functionally, pyrophosphatase that catalyzes the hydrolysis of nucleoside triphosphates to their monophosphate derivatives, with a high preference for the non-canonical purine nucleotides XTP (xanthosine triphosphate), dITP (deoxyinosine triphosphate) and ITP. Seems to function as a house-cleaning enzyme that removes non-canonical purine nucleotides from the nucleotide pool, thus preventing their incorporation into DNA/RNA and avoiding chromosomal lesions. The chain is dITP/XTP pyrophosphatase from Streptococcus thermophilus (strain ATCC BAA-250 / LMG 18311).